The chain runs to 312 residues: sn-1-specific diacylglycerol lipase ABHD11 (312 aa).

The N-terminal 14 residues, 1 to 14, are a transit peptide targeting the mitochondrion; that stretch reads MITFKSFHCSRGWH. An AB hydrolase-1 domain is found at 62-297; the sequence is PPLVLLHGLF…GAGHWVHADK (236 aa). Catalysis depends on charge relay system residues serine 136, glutamate 232, and histidine 291.

Belongs to the AB hydrolase superfamily. Post-translationally, phosphorylated.

The protein resides in the mitochondrion. Its subcellular location is the mitochondrion matrix. It catalyses the reaction 1-octadecanoyl-2-(5Z,8Z,11Z,14Z-eicosatetraenoyl)-sn-glycerol + H2O = 2-(5Z,8Z,11Z,14Z-eicosatetraenoyl)-glycerol + octadecanoate + H(+). It carries out the reaction a 1,2-diacyl-sn-glycerol + H2O = a 2-acylglycerol + a fatty acid + H(+). The catalysed reaction is a 1,3-diacyl-sn-glycerol + H2O = a 1-acyl-sn-glycerol + a fatty acid + H(+). The enzyme catalyses 1-octadecanoyl-2-(9Z-octadecenoyl)-sn-glycerol + H2O = 2-(9Z-octadecenoyl)-glycerol + octadecanoate + H(+). It catalyses the reaction 1-octadecanoyl-2-(4Z,7Z,10Z,13Z,16Z,19Z-docosahexaenoyl)-sn-glycerol + H2O = 2-(4Z,7Z,10Z,13Z,16Z,19Z-docosahexaenoyl)-glycerol + octadecanoate + H(+). It carries out the reaction 1,2-didecanoylglycerol + H2O = decanoylglycerol + decanoate + H(+). Catalyzes the hydrolysis of diacylglycerol in vitro and may function as a key regulator in lipid metabolism, namely by regulating the intracellular levels of diacylglycerol. 1,2-diacyl-sn-glycerols are the preferred substrate over 1,3-diacyl-sn-glycerols. The enzyme hydrolyzes stearate in preference to palmitate from the sn-1 position of 1,2-diacyl-sn-glycerols. The polypeptide is sn-1-specific diacylglycerol lipase ABHD11 (Xenopus laevis (African clawed frog)).